Consider the following 412-residue polypeptide: MPGSRVIESTSRTSRKVKLSLMGPAFIAAIGYIDPGNFATNIQSGAAYGYTLLWVVVWANLMAMLIQLLSAKLGIATGKNLAEHIRDRFPRPAVWAYWVQAEIIAMATDLAEFIGAAIGFKLLLGVSLLEGAILTAIATFLILMLQQRGQKPLEMVIGGLLLFVAAAYIVELVFSQPELSALAKGMAMPSLPTSDAVLLAAGVLGATIMPHVIYLHSSLTQHEGSHTRAERYSATKVDVAIAMTIAGFVNLAMMATAAAAFHFSGNQDIADLDKAYLTLEPLLGKAAAVIFGLSLVAAGLSSTVVGTLAGQVVMQGFVRFHIPLWVRRSVTMLPSFIVILSGMDPTRVLVLSQVVLSFGIALALVPLLSFTGNRELMGTMVNGKWVQRIGQLIVVLVVSLNMYLLIDTMSGI.

The next 10 helical transmembrane spans lie at 19 to 39 (LSLM…GNFA), 46 to 66 (AAYG…AMLI), 98 to 118 (WVQA…GAAI), 122 to 142 (LLLG…TFLI), 155 to 175 (MVIG…LVFS), 196 to 216 (AVLL…IYLH), 241 to 261 (IAMT…AAAF), 286 to 306 (AAAV…TVVG), 348 to 368 (VLVL…VPLL), and 392 to 412 (LIVV…MSGI).

Belongs to the NRAMP family.

The protein localises to the cell inner membrane. In terms of biological role, h(+)-stimulated, divalent metal cation uptake system. This is Divalent metal cation transporter MntH from Pectobacterium carotovorum subsp. carotovorum (strain PC1).